The chain runs to 284 residues: Bifunctional protein FolD 2 (284 aa).

Residues 166–168 (GAS) and isoleucine 232 each bind NADP(+).

The protein belongs to the tetrahydrofolate dehydrogenase/cyclohydrolase family. As to quaternary structure, homodimer.

It carries out the reaction (6R)-5,10-methylene-5,6,7,8-tetrahydrofolate + NADP(+) = (6R)-5,10-methenyltetrahydrofolate + NADPH. The catalysed reaction is (6R)-5,10-methenyltetrahydrofolate + H2O = (6R)-10-formyltetrahydrofolate + H(+). Its pathway is one-carbon metabolism; tetrahydrofolate interconversion. Its function is as follows. Catalyzes the oxidation of 5,10-methylenetetrahydrofolate to 5,10-methenyltetrahydrofolate and then the hydrolysis of 5,10-methenyltetrahydrofolate to 10-formyltetrahydrofolate. This Pseudomonas putida (strain ATCC 47054 / DSM 6125 / CFBP 8728 / NCIMB 11950 / KT2440) protein is Bifunctional protein FolD 2.